The following is a 1175-amino-acid chain: Solute carrier family 9 member C1 (1175 aa).

The Extracellular segment spans residues M1 to E39. The chain crosses the membrane as a helical span at residues I40–K59. Over D60–P64 the chain is Cytoplasmic. Residues L65–A82 traverse the membrane as a helical segment. Over S83–P98 the chain is Extracellular. Residues D99–F115 form a helical membrane-spanning segment. At D116–L125 the chain is on the cytoplasmic side. A helical membrane pass occupies residues F126–V151. Residues F126–H213 form a transport core domain region. Residues N152–K157 are Extracellular-facing. Residues T158–L183 traverse the membrane as a helical segment. Over G184–S186 the chain is Cytoplasmic. A helical transmembrane segment spans residues R187 to V212. Topologically, residues H213–L225 are extracellular. A helical transmembrane segment spans residues A226 to T257. The Cytoplasmic segment spans residues I258–D261. Residues D262–V283 form a helical membrane-spanning segment. At G284–S286 the chain is on the extracellular side. A helical transmembrane segment spans residues G287–S300. At T301–V307 the chain is on the cytoplasmic side. The chain crosses the membrane as a helical span at residues E308–Y339. At L340 to F344 the chain is on the extracellular side. A helical membrane pass occupies residues S345–R374. Residues S345 to L446 are transport core domain. Residues L375–S380 are Cytoplasmic-facing. A helical membrane pass occupies residues W381–L411. Residues G412–R415 are Extracellular-facing. The helical transmembrane segment at E416–L446 threads the bilayer. Over G447 to E632 the chain is Cytoplasmic. Positions Y618–F698 are ion transport-like. The helical transmembrane segment at F633 to I653 threads the bilayer. Over S654 to K657 the chain is Extracellular. Residues D658–A684 form a helical membrane-spanning segment. Over A685–F691 the chain is Cytoplasmic. A helical transmembrane segment spans residues S692–D716. The Extracellular segment spans residues S717–L724. The chain crosses the membrane as a helical span at residues T725 to L751. The Cytoplasmic portion of the chain corresponds to Q752–I1175. Positions M1137 to F1146 are enriched in basic and acidic residues. A disordered region spans residues M1137–I1175. A compositionally biased stretch (acidic residues) spans E1164–I1175.

Belongs to the monovalent cation:proton antiporter 1 (CPA1) transporter (TC 2.A.36) family. As to quaternary structure, interacts with soluble adenylyl cyclase (sAC). In terms of tissue distribution, testis-specific. Specifically present in the principal piece of sperm tail (at protein level).

It localises to the cell projection. The protein localises to the cilium. The protein resides in the flagellum membrane. Functionally, sperm-specific solute carrier involved in intracellular pH regulation of spermatozoa. Required for sperm motility and fertility. Involved in sperm cell hyperactivation, a step needed for sperm motility which is essential late in the preparation of sperm for fertilization. Required for the expression and bicarbonate regulation of the soluble adenylyl cyclase (sAC). This Mus musculus (Mouse) protein is Solute carrier family 9 member C1 (Slc9c1).